Consider the following 24-residue polypeptide: Brevinin-1 (24 aa).

Cys-18 and Cys-24 are joined by a disulfide.

The protein belongs to the frog skin active peptide (FSAP) family. Brevinin subfamily. Expressed by the skin glands.

It localises to the secreted. Its function is as follows. Shows antibacterial activity against representative Gram-negative and Gram-positive bacterial species, and a very high hemolytic activity. In Pelophylax porosus brevipodus (Nagoya Daruma pond frog), this protein is Brevinin-1.